We begin with the raw amino-acid sequence, 53 residues long: Rubredoxin (53 aa).

A Rubredoxin-like domain is found at Met1–Ala53. Cys6, Cys9, Cys39, and Cys42 together coordinate Fe cation.

The protein belongs to the rubredoxin family. It depends on Fe(3+) as a cofactor.

Its function is as follows. Rubredoxin is a small nonheme, iron protein lacking acid-labile sulfide. Its single Fe, chelated to 4 Cys, functions as an electron acceptor and may also stabilize the conformation of the molecule. This is Rubredoxin from Butyribacterium methylotrophicum.